Here is a 462-residue protein sequence, read N- to C-terminus: Threonine--tRNA ligase, mitochondrial (462 aa).

Residues 1-45 (MKIQLVRWHCSRNALWNRAFYSTRKATKNASSATPATMTSMVSQR) constitute a mitochondrion transit peptide.

It belongs to the class-II aminoacyl-tRNA synthetase family.

Its subcellular location is the mitochondrion matrix. It carries out the reaction tRNA(Thr) + L-threonine + ATP = L-threonyl-tRNA(Thr) + AMP + diphosphate + H(+). This Saccharomyces cerevisiae (strain ATCC 204508 / S288c) (Baker's yeast) protein is Threonine--tRNA ligase, mitochondrial (MST1).